A 1794-amino-acid polypeptide reads, in one-letter code: Protein TIC 214 (1794 aa).

The next 6 helical transmembrane spans lie at 23-43 (VVVGLYYGFITTFSIGPSYLF), 64-84 (FIMGQFMMLISIYYTPLHLAL), 87-107 (PHTITVLVLPYLLFHFFWNNH), 124-144 (LSIQCVFLNNLIFQLFNHFIL), 172-192 (VGWLIGHILFMKWVGLVLFWI), and 218-238 (ILSILLFITCVYYLGRIPSPI). Residues 244 to 307 (KETSETGETE…REGVNGKEKT (64 aa)) form a disordered region. Acidic residues predominate over residues 248 to 258 (ETGETEEETDV). Basic and acidic residues-rich tracts occupy residues 259-276 (EIERTSETKGTEQEKEGS) and 286-307 (SEEKGDPDKIDEREGVNGKEKT).

Belongs to the TIC214 family. Part of the Tic complex.

The protein resides in the plastid. The protein localises to the chloroplast inner membrane. In terms of biological role, involved in protein precursor import into chloroplasts. May be part of an intermediate translocation complex acting as a protein-conducting channel at the inner envelope. This chain is Protein TIC 214, found in Amborella trichopoda.